Reading from the N-terminus, the 124-residue chain is Histone H2A (124 aa).

Residues 1-18 (MSGRGKGGKAKGKSKTRS) show a composition bias toward basic residues. The tract at residues 1–23 (MSGRGKGGKAKGKSKTRSSRAGL) is disordered. N-acetylserine is present on Ser-2. Phosphoserine is present on Ser-2. The residue at position 104 (Gln-104) is an N5-methylglutamine.

This sequence belongs to the histone H2A family. The nucleosome is a histone octamer containing two molecules each of H2A, H2B, H3 and H4 assembled in one H3-H4 heterotetramer and two H2A-H2B heterodimers. The octamer wraps approximately 147 bp of DNA. In terms of processing, phosphorylation of Ser-2 directly represses transcription.

It localises to the nucleus. Its subcellular location is the chromosome. Its function is as follows. Core component of nucleosome. Nucleosomes wrap and compact DNA into chromatin, limiting DNA accessibility to the cellular machineries which require DNA as a template. Histones thereby play a central role in transcription regulation, DNA repair, DNA replication and chromosomal stability. DNA accessibility is regulated via a complex set of post-translational modifications of histones, also called histone code, and nucleosome remodeling. This chain is Histone H2A, found in Platynereis dumerilii (Dumeril's clam worm).